The primary structure comprises 1266 residues: Rho GTPase-activating protein 29 (1266 aa).

Residues serine 171, serine 176, serine 179, and serine 190 each carry the phosphoserine modification. The 271-residue stretch at 192-462 folds into the F-BAR domain; the sequence is IELDNLLLKN…SAKLYDPGQE (271 aa). A coiled-coil region spans residues 296-418; it reads RKNEMEKQRK…EILTQLRTLV (123 aa). The interval 482–501 is disordered; it reads NVNKQMTNSPQTSGYEPADS. Polar residues predominate over residues 483–495; sequence VNKQMTNSPQTSG. Phosphoserine is present on residues serine 501, serine 521, and serine 554. The span at 542–561 shows a compositional bias: low complexity; that stretch reads DSESTGGSSESRSLDSESIS. Residues 542 to 601 form a disordered region; the sequence is DSESTGGSSESRSLDSESISPGDFHRKLPRTPSSGTMSSADDLDEREPPSPSEAGPNSLG. A Phorbol-ester/DAG-type zinc finger spans residues 614–659; sequence THKFRKLRSPTKCRDCDGIVMFPGVECEECLLVCHRKCLENLVIIC. The Rho-GAP domain occupies 673–888; the sequence is AEFIQVAKKE…FLITYSQKIF (216 aa). Serine 920, serine 956, and serine 1028 each carry phosphoserine. 3 disordered regions span residues 1039–1081, 1116–1157, and 1209–1266; these read SSPT…KVNG, GLTV…ATAV, and KSDP…PQFV. The segment covering 1072 to 1081 has biased composition (polar residues); that stretch reads SNTTRSKVNG. Basic and acidic residues predominate over residues 1124–1136; that stretch reads NRDHPGSKAHAEP. A phosphoserine mark is found at serine 1149 and serine 1151. Acidic residues predominate over residues 1256-1266; that stretch reads EDLEDEIPQFV. Residues 1263–1266 are interaction with PTPN13/PTPL1; that stretch reads PQFV.

As to quaternary structure, interacts with PTPN13/PTPL1. Interacts with RAP2A via its coiled coil domain. Interacts with RASIP1.

In terms of biological role, GTPase activator for the Rho-type GTPases by converting them to an inactive GDP-bound state. Has strong activity toward RHOA, and weaker activity toward RAC1 and CDC42. May act as a specific effector of RAP2A to regulate Rho. In concert with RASIP1, suppresses RhoA signaling and dampens ROCK and MYH9 activities in endothelial cells and plays an essential role in blood vessel tubulogenesis. The polypeptide is Rho GTPase-activating protein 29 (Arhgap29) (Mus musculus (Mouse)).